The primary structure comprises 515 residues: UDP-glucosyltransferase 2 (515 aa).

Positions 1-20 are cleaved as a signal peptide; sequence MEFRLLILALFSVLMSTSNG. Over 21–471 the chain is Lumenal; it reads AEILALFPIH…TAGAFLHWYQ (451 aa). Asn51, Asn236, and Asn303 each carry an N-linked (GlcNAc...) asparagine glycan. The helical transmembrane segment at 472–492 threads the bilayer; it reads YLLLDVITFLLVTFCAFCFIV. The Cytoplasmic portion of the chain corresponds to 493-515; the sequence is KYICKALIHHYWSSSKSEKLKKN.

This sequence belongs to the UDP-glycosyltransferase family. Post-translationally, glycosylated.

The protein localises to the endoplasmic reticulum membrane. The catalysed reaction is kermesate + UDP-alpha-D-glucose = carminate + UDP + 2 H(+). It catalyses the reaction flavokermesate + UDP-alpha-D-glucose = flavokermesate 7-C-beta-D-glucoside + UDP + 2 H(+). Its function is as follows. Membrane-bound UDP-glucosyltransferase (UGT) which catalyzes the C-glucosylation of kermesate and flavokermesate to produce carminate and flavokermesate 7-C-beta-D-glucoside (dcll) respectively. Carminate is used as a deterrent against insect predators. This chain is UDP-glucosyltransferase 2, found in Dactylopius coccus (Cochineal).